The chain runs to 235 residues: Casparian strip membrane protein 2 (235 aa).

Positions 1 to 46 (MSGSDTSGSVHVDEHGHGKASSSYDGAGAPAPAPAPFQGHRKAGSG) are disordered. The Cytoplasmic portion of the chain corresponds to 1–67 (MSGSDTSGSV…GSGGDGLRRC (67 aa)). A helical transmembrane segment spans residues 68–88 (LGLIDFVLRVAAFGPTLAAAI). Residues 89–115 (SIGTSDERLSVFTNYFQFRARFDDFPA) are Extracellular-facing. A helical membrane pass occupies residues 116–136 (FEFFIVANAIAAGYMVLSLPF). At 137-150 (SAATIMSSKATGVK) the chain is on the cytoplasmic side. A helical transmembrane segment spans residues 151-171 (LLLLICDTIMVGLLTAAASAA). Topologically, residues 172 to 203 (AAMVYVAHEGNLRANWVPICLQFHGFCQRTSG) are extracellular. Residues 204 to 224 (AVIASFLAVFVLMVLIVMAAF) form a helical membrane-spanning segment. The Cytoplasmic portion of the chain corresponds to 225–235 (TMPRRTHHTAS).

It belongs to the Casparian strip membrane proteins (CASP) family. Homodimer and heterodimers.

The protein localises to the cell membrane. Its function is as follows. Regulates membrane-cell wall junctions and localized cell wall deposition. Required for establishment of the Casparian strip membrane domain (CSD) and the subsequent formation of Casparian strips, a cell wall modification of the root endodermis that determines an apoplastic barrier between the intraorganismal apoplasm and the extraorganismal apoplasm and prevents lateral diffusion. The protein is Casparian strip membrane protein 2 of Oryza sativa subsp. indica (Rice).